Reading from the N-terminus, the 858-residue chain is Phospholipase D gamma 1 (858 aa).

The C2 domain occupies 27–163; that stretch reads PFATSSGSLR…CSGNRIEGLF (137 aa). A Ca(2+)-binding site is contributed by Asp225. In terms of domain architecture, PLD phosphodiesterase 1 spans 364–399; it reads TIYTHHQKTVIVDAEAAQNRRKIVAFVGGLDLCNGR. Active-site residues include His369, Lys371, and Asp376. His369 is an a 1,2-diacyl-sn-glycero-3-phosphate binding site. Ca(2+) contacts are provided by His405 and His437. Gln565 serves as a coordination point for a 1,2-diacyl-sn-glycero-3-phosphate. The residue at position 680 (Ser680) is a Phosphoserine. Residues 704–731 enclose the PLD phosphodiesterase 2 domain; the sequence is FMIYVHSKGMVVDDEFVLIGSANINQRS. Residues His709, Lys711, and Asp716 contribute to the active site. His709 contacts a 1,2-diacyl-sn-glycero-3-phosphate. Glu772 provides a ligand contact to Ca(2+).

It belongs to the phospholipase D family. C2-PLD subfamily. The cofactor is Ca(2+). Highly expressed in roots and flowers, moderately in stems, leaves and seedlings and low in siliques. Not detected in seeds.

Its subcellular location is the cytoplasm. The protein localises to the membrane. The catalysed reaction is a 1,2-diacyl-sn-glycero-3-phosphocholine + H2O = a 1,2-diacyl-sn-glycero-3-phosphate + choline + H(+). Its activity is regulated as follows. Inhibited by neomycin. Up-regulated by PIP2 binding. Its function is as follows. Hydrolyzes glycerol-phospholipids at the terminal phosphodiesteric bond to generate phosphatidic acids (PA). Plays an important role in various cellular processes, including phytohormone action, vesicular trafficking, secretion, cytoskeletal arrangement, meiosis, tumor promotion, pathogenesis, membrane deterioration and senescence. Can use phosphatidylserine (PS) and phosphatidylethanolamine (PE) as substrates only in the presence of PIP2. Can use phosphatidylcholine (PC), phosphatidylglycerol (PG) or N-acylphosphatidylethanolamine (NAPE) as substrates in the presence of PE and PIP2. Involved in membrane lipid modulation under aluminum (Al) stress and negatively modulate plant tolerance to Al. The protein is Phospholipase D gamma 1 of Arabidopsis thaliana (Mouse-ear cress).